Here is a 352-residue protein sequence, read N- to C-terminus: Molybdenum import ATP-binding protein ModC (352 aa).

Positions 2-230 constitute an ABC transporter domain; it reads MLEINVKKRL…PLFEPWQEQG (229 aa). 32–39 is a binding site for ATP; that stretch reads GISGSGKS. The 63-residue stretch at 290–352 folds into the Mop domain; sequence KTSIRNILSG…YAQIKAVSVM (63 aa).

It belongs to the ABC transporter superfamily. Molybdate importer (TC 3.A.1.8) family. The complex is composed of two ATP-binding proteins (ModC), two transmembrane proteins (ModB) and a solute-binding protein (ModA).

The protein resides in the cell inner membrane. The catalysed reaction is molybdate(out) + ATP + H2O = molybdate(in) + ADP + phosphate + H(+). Functionally, part of the ABC transporter complex ModABC involved in molybdenum import. Responsible for energy coupling to the transport system. This chain is Molybdenum import ATP-binding protein ModC, found in Mannheimia succiniciproducens (strain KCTC 0769BP / MBEL55E).